The sequence spans 215 residues: Probable phosphoglycerate mutase GpmB (215 aa).

Residues 8 to 15 (RHGETEWN), 21 to 22 (QG), Arg-58, 82 to 85 (ELDM), and 151 to 152 (GI) each bind substrate. His-9 (tele-phosphohistidine intermediate) is an active-site residue. Residue Glu-82 is the Proton donor/acceptor of the active site.

This sequence belongs to the phosphoglycerate mutase family. GpmB subfamily.

It carries out the reaction (2R)-2-phosphoglycerate = (2R)-3-phosphoglycerate. The protein operates within carbohydrate degradation; glycolysis; pyruvate from D-glyceraldehyde 3-phosphate: step 3/5. This is Probable phosphoglycerate mutase GpmB from Proteus mirabilis (strain HI4320).